A 185-amino-acid chain; its full sequence is HTH-type transcriptional regulator PuuR (185 aa).

Residues 1 to 20 (MSDEGLAPGKRLSEIRQQQG) are disordered. One can recognise an HTH cro/C1-type domain in the interval 12–66 (LSEIRQQQGLSQRRAAELSGLTHSAISTIEQDKVSPAISTLQKLLKVYGLSLSEF). A DNA-binding region (H-T-H motif) is located at residues 23–42 (QRRAAELSGLTHSAISTIEQ). The 68-residue stretch at 111-178 (FETYQPGTTT…TSAGICRIIS (68 aa)) folds into the Cupin type-2 domain.

It functions in the pathway amine and polyamine degradation; putrescine degradation [regulation]. Functionally, represses puuA, puuD and puuP. In Escherichia coli (strain K12), this protein is HTH-type transcriptional regulator PuuR (puuR).